The sequence spans 525 residues: ATP synthase subunit beta, mitochondrial (525 aa).

The transit peptide at 1-44 (MLKKQALSGIRRFSLATKQSFVKTSYKLPRKSWLNTAKFNTIRY) directs the protein to the mitochondrion. 203 to 210 (GGAGVGKT) contributes to the ATP binding site.

It belongs to the ATPase alpha/beta chains family. In terms of assembly, F-type ATPases have 2 components, CF(1) - the catalytic core - and CF(0) - the membrane proton channel. CF(1) has five subunits: alpha(3), beta(3), gamma(1), delta(1), epsilon(1). CF(0) has three main subunits: a, b and c.

Its subcellular location is the mitochondrion. It is found in the mitochondrion inner membrane. The catalysed reaction is ATP + H2O + 4 H(+)(in) = ADP + phosphate + 5 H(+)(out). Functionally, mitochondrial membrane ATP synthase (F(1)F(0) ATP synthase or Complex V) produces ATP from ADP in the presence of a proton gradient across the membrane which is generated by electron transport complexes of the respiratory chain. F-type ATPases consist of two structural domains, F(1) - containing the extramembraneous catalytic core, and F(0) - containing the membrane proton channel, linked together by a central stalk and a peripheral stalk. During catalysis, ATP synthesis in the catalytic domain of F(1) is coupled via a rotary mechanism of the central stalk subunits to proton translocation. Subunits alpha and beta form the catalytic core in F(1). Rotation of the central stalk against the surrounding alpha(3)beta(3) subunits leads to hydrolysis of ATP in three separate catalytic sites on the beta subunits. The sequence is that of ATP synthase subunit beta, mitochondrial (atp2) from Schizosaccharomyces pombe (strain 972 / ATCC 24843) (Fission yeast).